The primary structure comprises 417 residues: Serine hydroxymethyltransferase (417 aa).

Residues L121 and 125 to 127 each bind (6S)-5,6,7,8-tetrahydrofolate; that span reads GHL. Residue K229 is modified to N6-(pyridoxal phosphate)lysine. 355 to 357 contributes to the (6S)-5,6,7,8-tetrahydrofolate binding site; sequence SPF.

The protein belongs to the SHMT family. In terms of assembly, homodimer. The cofactor is pyridoxal 5'-phosphate.

The protein localises to the cytoplasm. It carries out the reaction (6R)-5,10-methylene-5,6,7,8-tetrahydrofolate + glycine + H2O = (6S)-5,6,7,8-tetrahydrofolate + L-serine. It participates in one-carbon metabolism; tetrahydrofolate interconversion. Its pathway is amino-acid biosynthesis; glycine biosynthesis; glycine from L-serine: step 1/1. In terms of biological role, catalyzes the reversible interconversion of serine and glycine with tetrahydrofolate (THF) serving as the one-carbon carrier. This reaction serves as the major source of one-carbon groups required for the biosynthesis of purines, thymidylate, methionine, and other important biomolecules. Also exhibits THF-independent aldolase activity toward beta-hydroxyamino acids, producing glycine and aldehydes, via a retro-aldol mechanism. The polypeptide is Serine hydroxymethyltransferase (Buchnera aphidicola subsp. Schizaphis graminum (strain Sg)).